A 162-amino-acid chain; its full sequence is Globin CTT-VIIB-7 (162 aa).

The first 16 residues, 1 to 16, serve as a signal peptide directing secretion; it reads MKFFAVLALCVVGAIA. A Globin domain is found at 18–162; the sequence is PLSADEANLV…TYAVALKSLE (145 aa). Residues His-76 and His-111 each coordinate heme b.

Belongs to the globin family. As to quaternary structure, homodimer.

This is Globin CTT-VIIB-7 (CTT-7B7) from Chironomus thummi piger (Midge).